A 168-amino-acid chain; its full sequence is Ribosome maturation factor RimM (168 aa).

Positions 95-168 (EEGYYWSDLI…RITVDWGLDY (74 aa)) constitute a PRC barrel domain.

The protein belongs to the RimM family. In terms of assembly, binds ribosomal protein uS19.

It localises to the cytoplasm. Functionally, an accessory protein needed during the final step in the assembly of 30S ribosomal subunit, possibly for assembly of the head region. Essential for efficient processing of 16S rRNA. May be needed both before and after RbfA during the maturation of 16S rRNA. It has affinity for free ribosomal 30S subunits but not for 70S ribosomes. The sequence is that of Ribosome maturation factor RimM from Nitrosospira multiformis (strain ATCC 25196 / NCIMB 11849 / C 71).